A 586-amino-acid polypeptide reads, in one-letter code: Arginine--tRNA ligase (586 aa).

A 'HIGH' region motif is present at residues 128–138 (ANPTGPLHVGH).

Belongs to the class-I aminoacyl-tRNA synthetase family. Monomer.

It localises to the cytoplasm. It catalyses the reaction tRNA(Arg) + L-arginine + ATP = L-arginyl-tRNA(Arg) + AMP + diphosphate. This is Arginine--tRNA ligase from Legionella pneumophila (strain Corby).